The following is a 342-amino-acid chain: Probable dual-specificity RNA methyltransferase RlmN (342 aa).

Glu-91 serves as the catalytic Proton acceptor. Positions 97–326 (YKFGNTACVS…CTVRRELGSD (230 aa)) constitute a Radical SAM core domain. Cys-104 and Cys-331 form a disulfide bridge. [4Fe-4S] cluster contacts are provided by Cys-111, Cys-115, and Cys-118. Residues 157 to 158 (GE), Ser-189, 212 to 214 (SLH), and Asn-288 contribute to the S-adenosyl-L-methionine site. Cys-331 serves as the catalytic S-methylcysteine intermediate.

Belongs to the radical SAM superfamily. RlmN family. Requires [4Fe-4S] cluster as cofactor.

Its subcellular location is the cytoplasm. The catalysed reaction is adenosine(2503) in 23S rRNA + 2 reduced [2Fe-2S]-[ferredoxin] + 2 S-adenosyl-L-methionine = 2-methyladenosine(2503) in 23S rRNA + 5'-deoxyadenosine + L-methionine + 2 oxidized [2Fe-2S]-[ferredoxin] + S-adenosyl-L-homocysteine. The enzyme catalyses adenosine(37) in tRNA + 2 reduced [2Fe-2S]-[ferredoxin] + 2 S-adenosyl-L-methionine = 2-methyladenosine(37) in tRNA + 5'-deoxyadenosine + L-methionine + 2 oxidized [2Fe-2S]-[ferredoxin] + S-adenosyl-L-homocysteine. Its function is as follows. Specifically methylates position 2 of adenine 2503 in 23S rRNA and position 2 of adenine 37 in tRNAs. In Caldanaerobacter subterraneus subsp. tengcongensis (strain DSM 15242 / JCM 11007 / NBRC 100824 / MB4) (Thermoanaerobacter tengcongensis), this protein is Probable dual-specificity RNA methyltransferase RlmN.